The chain runs to 147 residues: Ubiquitin-conjugating enzyme E2 D2 (147 aa).

The region spanning 1 to 147 (MALKRIHKEL…AREWTQKYAM (147 aa)) is the UBC core domain. Cys85 (glycyl thioester intermediate) is an active-site residue.

Belongs to the ubiquitin-conjugating enzyme family. In terms of assembly, interacts with SCF (SKP1-CUL1-F-box protein) E3 ubiquitin ligase complex. Interacts with CNOT4 (via RING domain). Interacts with E3 ubiquitin-protein ligases CBLC, PJA1 and PJA2. Interacts with PDZRN3. Interacts with PPP1R11. Interacts with E3 ubiquitin-protein ligase PHF7; the interaction inhibits cleavage of PHF7 and promotes association of the complex with the nucleosome core particle.

The catalysed reaction is S-ubiquitinyl-[E1 ubiquitin-activating enzyme]-L-cysteine + [E2 ubiquitin-conjugating enzyme]-L-cysteine = [E1 ubiquitin-activating enzyme]-L-cysteine + S-ubiquitinyl-[E2 ubiquitin-conjugating enzyme]-L-cysteine.. The enzyme catalyses S-ubiquitinyl-[E1 ubiquitin-activating enzyme]-L-cysteine + [acceptor protein]-L-lysine = [E1 ubiquitin-activating enzyme]-L-cysteine + N(6)-monoubiquitinyl-[acceptor protein]-L-lysine.. The protein operates within protein modification; protein ubiquitination. In terms of biological role, accepts ubiquitin from the E1 complex and catalyzes its covalent attachment to other proteins. In vitro catalyzes 'Lys-48'-linked polyubiquitination. Mediates the selective degradation of short-lived and abnormal proteins. Functions in the E6/E6-AP-induced ubiquitination of p53/TP53. Mediates ubiquitination of PEX5 and SQSTM1 and autoubiquitination of STUB1 and TRAF6. Involved in the signal-induced conjugation and subsequent degradation of NFKBIA, FBXW2-mediated GCM1 ubiquitination and degradation, MDM2-dependent degradation of p53/TP53 and the activation of MAVS in the mitochondria by RIGI in response to viral infection. Essential for viral activation of IRF3. The polypeptide is Ubiquitin-conjugating enzyme E2 D2 (UBE2D2) (Bos taurus (Bovine)).